A 378-amino-acid polypeptide reads, in one-letter code: Fructose-1,6-bisphosphatase class 1 2 (378 aa).

4 residues coordinate Mg(2+): Glu98, Asp120, Leu122, and Asp123. Residues 123-126 (DGSS) and Asn227 contribute to the substrate site. Glu299 is a Mg(2+) binding site.

This sequence belongs to the FBPase class 1 family. Homotetramer. Mg(2+) is required as a cofactor.

The protein resides in the cytoplasm. It catalyses the reaction beta-D-fructose 1,6-bisphosphate + H2O = beta-D-fructose 6-phosphate + phosphate. The protein operates within carbohydrate biosynthesis; gluconeogenesis. The chain is Fructose-1,6-bisphosphatase class 1 2 from Paraburkholderia xenovorans (strain LB400).